A 3094-amino-acid chain; its full sequence is Replicase polyprotein 1ab (3094 aa).

Residues Cys-509 and His-569 each act as for leader protease activity in the active site. Residues 622–647 are a coiled coil; that stretch reads ARSVEKDLIDFKDEIKSLSKEKRSVT. In terms of domain architecture, Alphavirus-like MT spans 670–857; the sequence is SFTHSVYSDH…HKLSNIKSIM (188 aa). Positions 1807 to 1816 are enriched in low complexity; it reads DSESVSSDEV. The disordered stretch occupies residues 1807 to 1828; sequence DSESVSSDEVASNPRPGLHGGS. One can recognise a (+)RNA virus helicase ATP-binding domain in the interval 2215–2387; that stretch reads TQTNFVSANA…FVDDESRVYG (173 aa). In terms of domain architecture, (+)RNA virus helicase C-terminal spans 2388-2548; that stretch reads EVSYRCPWDV…AYRVYPTSFG (161 aa). Residues 2817–2930 form the RdRp catalytic domain; it reads YNVGEIDFSK…FSESPIRNSA (114 aa).

The leader protease is released by autoproteolysis.

It localises to the host cytoplasmic vesicle membrane. It carries out the reaction RNA(n) + a ribonucleoside 5'-triphosphate = RNA(n+1) + diphosphate. The enzyme catalyses ATP + H2O = ADP + phosphate + H(+). Functionally, L-pro is involved in systemic transport and in RNA amplification. RNA-dependent RNA polymerase replicates the viral genome. This chain is Replicase polyprotein 1ab, found in Beet yellows virus (isolate Ukraine) (BYV).